Consider the following 185-residue polypeptide: ADP-ribosylation factor (185 aa).

A lipid anchor (N-myristoyl glycine) is attached at G2. GTP-binding positions include 27–34, 70–74, and 129–132; these read GLDAAGKT, DVGGQ, and NKQD.

It belongs to the small GTPase superfamily. Arf family.

The protein localises to the golgi apparatus. Its function is as follows. GTP-binding protein involved in protein trafficking; may modulate vesicle budding and uncoating within the Golgi apparatus. This is ADP-ribosylation factor from Neurospora crassa (strain ATCC 24698 / 74-OR23-1A / CBS 708.71 / DSM 1257 / FGSC 987).